A 235-amino-acid polypeptide reads, in one-letter code: 2-C-methyl-D-erythritol 4-phosphate cytidylyltransferase (235 aa).

The protein belongs to the IspD/TarI cytidylyltransferase family. IspD subfamily.

The catalysed reaction is 2-C-methyl-D-erythritol 4-phosphate + CTP + H(+) = 4-CDP-2-C-methyl-D-erythritol + diphosphate. The protein operates within isoprenoid biosynthesis; isopentenyl diphosphate biosynthesis via DXP pathway; isopentenyl diphosphate from 1-deoxy-D-xylulose 5-phosphate: step 2/6. In terms of biological role, catalyzes the formation of 4-diphosphocytidyl-2-C-methyl-D-erythritol from CTP and 2-C-methyl-D-erythritol 4-phosphate (MEP). The sequence is that of 2-C-methyl-D-erythritol 4-phosphate cytidylyltransferase from Pseudomonas putida (strain W619).